We begin with the raw amino-acid sequence, 563 residues long: MEKSTMSAILLVLYIFVLHLQYSEVHSLATTSDHDFSYLSFAYDATDLELEGSYDYVIVGGGTSGCPLAATLSEKYKVLVLERGSLPTAYPNVLTADGFVYNLQQEDDGKTPVERFVSEDGIDNVRGRVLGGTSIINAGVYARANTSIYSASGVDWDMDLVNQTYEWVEDTIVYKPNSQSWQSVTKTAFLEAGVHPNHGFSLDHEEGTRITGSTFDNKGTRHAADELLNKGNSNNLRVGVHASVEKIIFSNAPGLTATGVIYRDSNGTPHQAFVRSKGEVIVSAGTIGTPQLLLLSGVGPESYLSSLNIPVVLSHPYVGQFLHDNPRNFINILPPNPIEPTIVTVLGISNDFYQCSFSSLPFTTPPFGFFPSASYPLPNSTFAHFASKVAGPLSYGSLTLKSSSNVRVSPNVKFNYYSNLTDLSHCVSGMKKIGELLSTDALKPYKVEDLPGVEGFNILGIPLPKDQTDDAAFETFCRESVASYWHYHGGCLVGKVLDGDFRVTGINALRVVDGSTFPYTPASHPQGFYLMLGRYVGIKILQERSASDLKILDSLKSAASLVL.

The signal sequence occupies residues 1 to 27; it reads MEKSTMSAILLVLYIFVLHLQYSEVHS. FAD contacts are provided by residues 63–64, 82–83, valine 129, threonine 133, and 137–140; these read TS, ER, and NAGV. 2 N-linked (GlcNAc...) asparagine glycosylation sites follow: asparagine 145 and asparagine 162. Valine 244 is a binding site for FAD. Substrate is bound at residue cysteine 355. N-linked (GlcNAc...) asparagine glycans are attached at residues asparagine 379 and asparagine 419. A disulfide bond links cysteine 426 and cysteine 477. Tyrosine 484 contacts substrate. Residues 485 to 486 and glycine 514 contribute to the FAD site; that span reads WH. The active-site Proton donor is histidine 486. Histidine 524 (proton acceptor) is an active-site residue. 525–526 is an FAD binding site; it reads PQ.

The protein belongs to the GMC oxidoreductase family. In terms of assembly, monomer. It depends on FAD as a cofactor. Post-translationally, glycosylated. Deglycosylation does not affect the enzymatic activity.

It carries out the reaction (R)-mandelonitrile = benzaldehyde + hydrogen cyanide. Involved in cyanogenesis, the release of HCN from injured tissues. Catalyzes the stereospecific addition of HCN to a variety of aldehydes in vitro. Has no oxidase activity. The redox properties of the FAD cofactor appear to be unimportant for catalysis. The sequence is that of (R)-mandelonitrile lyase 2 (MDL2) from Prunus dulcis (Almond).